We begin with the raw amino-acid sequence, 1088 residues long: Methionine S-methyltransferase (1088 aa).

This sequence belongs to the class I-like SAM-binding methyltransferase superfamily. As to quaternary structure, homotetramer. As to expression, expressed in the shoot, scutellum, and aleurone cells but not in the root or endosperm.

It is found in the cytoplasm. The enzyme catalyses L-methionine + S-adenosyl-L-methionine = S-methyl-L-methionine + S-adenosyl-L-homocysteine. Catalyzes the S-methylmethionine (SMM) biosynthesis from adenosyl-L-homocysteine (AdoMet) and methionine. SMM biosynthesis (by MMT1) and degradation (by HMT-1, HMT-2 and HMT-3) constitute the SMM cycle in plants, which is probably required to achieve short term control of AdoMet level. Also able to catalyze the selenium-methylmethionine (SeMM) from AdoMet and selenium-methionine (SeMet). May play a role in phoem sulfur transport; such function is however not essential. The polypeptide is Methionine S-methyltransferase (MMT1) (Hordeum vulgare (Barley)).